We begin with the raw amino-acid sequence, 615 residues long: Protein DlpA (615 aa).

Belongs to the isocitrate and isopropylmalate dehydrogenases family. This sequence to M.jannaschii MJ0644 in the C-terminal section.

This Legionella pneumophila subsp. pneumophila (strain Philadelphia 1 / ATCC 33152 / DSM 7513) protein is Protein DlpA (dlpA).